The following is a 323-amino-acid chain: NAC transcription factor 25 (323 aa).

The 162-residue stretch at 16–177 folds into the NAC domain; that stretch reads LPPGFRFHPT…DWVLCRIYKK (162 aa). Residues 114–183 mediate DNA binding; sequence VGVKKALVFY…IYKKNSSQRP (70 aa). Residues 201 to 221 are compositionally biased toward low complexity; that stretch reads KSSANSSSTSVLDNNDNNNNN. Positions 201–223 are disordered; sequence KSSANSSSTSVLDNNDNNNNNNE.

As to expression, expressed specifically in the tapetum.

The protein localises to the nucleus. In terms of biological role, transcription factor of the NAC family. May be associated with anther development and pollen production. Required for normal seed development and morphology. The protein is NAC transcription factor 25 (NAC025) of Arabidopsis thaliana (Mouse-ear cress).